Here is a 131-residue protein sequence, read N- to C-terminus: Small ribosomal subunit protein uS11 (131 aa).

Belongs to the universal ribosomal protein uS11 family. As to quaternary structure, part of the 30S ribosomal subunit. Interacts with proteins S7 and S18. Binds to IF-3.

In terms of biological role, located on the platform of the 30S subunit, it bridges several disparate RNA helices of the 16S rRNA. Forms part of the Shine-Dalgarno cleft in the 70S ribosome. In Geobacter metallireducens (strain ATCC 53774 / DSM 7210 / GS-15), this protein is Small ribosomal subunit protein uS11.